Reading from the N-terminus, the 200-residue chain is MAASAGPEIERLIALLSKLPGLGPRSGRRAALALLKKRDTLLAPLTAALVDAQAKVRTCSVCGSLDTSDPCAICSDAARDNRLLCVVEEVGSLWAMERGGSFKGRYHVLGGLLSALDGVGPEALRVGELLGRAKGGEVSEVILALPATVDGQTTAHYLADRLAPTGVSVTMLARGVPVGGDLDWLDDGTIAQALRARRPA.

The C4-type zinc finger occupies 59–74 (CSVCGSLDTSDPCAIC). Residues 82-177 (RLLCVVEEVG…SVTMLARGVP (96 aa)) form the Toprim domain.

Belongs to the RecR family.

In terms of biological role, may play a role in DNA repair. It seems to be involved in an RecBC-independent recombinational process of DNA repair. It may act with RecF and RecO. This Caulobacter sp. (strain K31) protein is Recombination protein RecR.